The chain runs to 248 residues: Cytochrome c oxidase subunit 2 (248 aa).

Residues 1 to 43 (MTNLLNNWLIINQFGYDLPEPWQLGLQDAAHPVMEEIIFFHDQ) lie on the Mitochondrial intermembrane side of the membrane. A helical membrane pass occupies residues 44-65 (VMFILIIIITTVLWLIVKALSG). Topologically, residues 66 to 79 (KAYHRYLVDGTLLE) are mitochondrial matrix. A helical membrane pass occupies residues 80–99 (IIWTIVPAIILILIAFPSLK). Residues 100–248 (LLYLMDEVMD…INWVLSGSDE (149 aa)) are Mitochondrial intermembrane-facing. His180, Cys215, Glu217, Cys219, His223, and Met226 together coordinate Cu cation. A Mg(2+)-binding site is contributed by Glu217.

The protein belongs to the cytochrome c oxidase subunit 2 family. As to quaternary structure, component of the cytochrome c oxidase (complex IV, CIV), a multisubunit enzyme composed of a catalytic core of 3 subunits and several supernumerary subunits. The complex exists as a monomer or a dimer and forms supercomplexes (SCs) in the inner mitochondrial membrane with ubiquinol-cytochrome c oxidoreductase (cytochrome b-c1 complex, complex III, CIII). It depends on Cu cation as a cofactor.

It localises to the mitochondrion inner membrane. It carries out the reaction 4 Fe(II)-[cytochrome c] + O2 + 8 H(+)(in) = 4 Fe(III)-[cytochrome c] + 2 H2O + 4 H(+)(out). Its function is as follows. Component of the cytochrome c oxidase, the last enzyme in the mitochondrial electron transport chain which drives oxidative phosphorylation. The respiratory chain contains 3 multisubunit complexes succinate dehydrogenase (complex II, CII), ubiquinol-cytochrome c oxidoreductase (cytochrome b-c1 complex, complex III, CIII) and cytochrome c oxidase (complex IV, CIV), that cooperate to transfer electrons derived from NADH and succinate to molecular oxygen, creating an electrochemical gradient over the inner membrane that drives transmembrane transport and the ATP synthase. Cytochrome c oxidase is the component of the respiratory chain that catalyzes the reduction of oxygen to water. Electrons originating from reduced cytochrome c in the intermembrane space (IMS) are transferred via the dinuclear copper A center (CU(A)) of subunit 2 and heme A of subunit 1 to the active site in subunit 1, a binuclear center (BNC) formed by heme A3 and copper B (CU(B)). The BNC reduces molecular oxygen to 2 water molecules using 4 electrons from cytochrome c in the IMS and 4 protons from the mitochondrial matrix. This Metridium senile (Brown sea anemone) protein is Cytochrome c oxidase subunit 2 (COII).